Reading from the N-terminus, the 203-residue chain is Large ribosomal subunit protein bL25 (203 aa).

This sequence belongs to the bacterial ribosomal protein bL25 family. CTC subfamily. As to quaternary structure, part of the 50S ribosomal subunit; part of the 5S rRNA/L5/L18/L25 subcomplex. Contacts the 5S rRNA. Binds to the 5S rRNA independently of L5 and L18.

This is one of the proteins that binds to the 5S RNA in the ribosome where it forms part of the central protuberance. The protein is Large ribosomal subunit protein bL25 of Dechloromonas aromatica (strain RCB).